The chain runs to 267 residues: Small ribosomal subunit protein uS2 (267 aa).

Residues 247–267 (LEDDILEDVEDEEEGDPEQGE) form a disordered region.

This sequence belongs to the universal ribosomal protein uS2 family.

This chain is Small ribosomal subunit protein uS2, found in Synechococcus sp. (strain JA-3-3Ab) (Cyanobacteria bacterium Yellowstone A-Prime).